We begin with the raw amino-acid sequence, 424 residues long: Inhibin beta A chain (424 aa).

The signal sequence occupies residues 1-20; it reads MPLLWLRGFLLASCWIIVRS. The propeptide occupies 21 to 308; the sequence is SPTPGSEGHG…EDHPHRRRRR (288 aa). Residue N165 is glycosylated (N-linked (GlcNAc...) asparagine). The span at 264 to 275 shows a compositional bias: basic and acidic residues; it reads EVDGDGKKKDGS. Residues 264–306 are disordered; it reads EVDGDGKKKDGSDGGLEEEKEQSHRPFLMLQARQSEDHPHRRR. Disulfide bonds link C312-C320, C319-C389, C348-C421, and C352-C423.

Belongs to the TGF-beta family. In terms of assembly, dimeric, linked by one or more disulfide bonds. Inhibin A is a dimer of alpha/INHA and beta-A/INHBA. Activin A is a homodimer of beta-A/INHBA. Activin AB is a dimer of beta-A/INHBA and beta-B/INHBB. Interacts with FST and FSTL3; these interactions prevent activin A interaction to its type II receptor. Activin A interacts with ACVR2A. Activin A interacts with BMPR2. Inhibin A interacts with ACVR1; this interaction creates a non-signaling complex (NSC) that inhibits ACVR1-mediated BMP signaling. Inhibin A interacts with ACVR2A.

It is found in the secreted. Its function is as follows. Inhibins/activins are involved in regulating a number of diverse functions such as hypothalamic and pituitary hormone secretion, gonadal hormone secretion, germ cell development and maturation, erythroid differentiation, insulin secretion, nerve cell survival, embryonic axial development or bone growth, depending on their subunit composition. Activin A is a homodimer of INHBA that plays a role in several essential biological processes including embryonic development, stem cell maintenance and differentiation, haematopoiesis, cell proliferation and tissue fibrosis. Signals through type I (such as ACVR1B or ACVR1C) and type II receptors (such as ACVR2A, ACVR2B or BMPR2) which, upon ligand binding, phosphorylate SMAD2 and SMAD3 intracellular signaling mediators that form a complex with SMAD4, translocate to the nucleus and modulate gene expression. Can also activate alternative non-canonical intracellular signaling pathways including the p38 MAPK, extracellular signal-regulated kinases 1/2 (ERK1/2) and c-Jun N-terminal kinases (JNKs) to modulate cell migration and differentiation. Alternatively, promotes osteoblastic differentiation via ACVRL1-SMAD1/5/9 pathway. In addition, can engage the type I receptor ACVR1 to form an ACVR1-activin A-type II receptor non-signaling complex (NSC) that renders receptors unavailable for engagement with BMPs, hence resulting in an apparent inhibition of ACVR1-mediated BMP signaling. In terms of biological role, inhibin A is a dimer of alpha/INHA and beta-A/INHBA that functions as a feedback regulator in the hypothalamic-pituitary-gonadal (HPG) axis. Inhibits the secretion of FSH from the anterior pituitary gland by acting on pituitary gonadotrope cells. Antagonizes activin A by binding to the proteoglycan, betaglycan, and forming a stable complex with and, thereby, sequestering type II activin receptors while excluding type I receptor. This Rattus norvegicus (Rat) protein is Inhibin beta A chain (Inhba).